The primary structure comprises 102 residues: MFAIIETGGKQIKVEEGQEIYVEKLNANEGDSFTFDKVLFVGGDSVKVGAPTVEGASVTATVNKQGRGKKITVFTYKRRKDSKRKKGHRQPYTKLTIDKINA.

Residues 79-91 are compositionally biased toward basic residues; that stretch reads RKDSKRKKGHRQP. Positions 79 to 102 are disordered; sequence RKDSKRKKGHRQPYTKLTIDKINA.

Belongs to the bacterial ribosomal protein bL21 family. As to quaternary structure, part of the 50S ribosomal subunit. Contacts protein L20.

In terms of biological role, this protein binds to 23S rRNA in the presence of protein L20. This Staphylococcus epidermidis (strain ATCC 35984 / DSM 28319 / BCRC 17069 / CCUG 31568 / BM 3577 / RP62A) protein is Large ribosomal subunit protein bL21.